A 163-amino-acid chain; its full sequence is ATP synthase subunit delta, mitochondrial (163 aa).

Residues 1 to 18 constitute a mitochondrion transit peptide; sequence MLARTIQRFSVVAKRGYA.

Belongs to the ATPase epsilon chain family. Subunit of the F-type ATPase which has 2 components, CF(1) - the catalytic core - and CF(0) - the membrane proton channel.

Its subcellular location is the mitochondrion. It is found in the mitochondrion inner membrane. In terms of biological role, mitochondrial membrane ATP synthase (F(1)F(0) ATP synthase or Complex V) produces ATP from ADP in the presence of a proton gradient across the membrane which is generated by electron transport complexes of the respiratory chain. F-type ATPases consist of two structural domains, F(1) - containing the extramembraneous catalytic core, and F(0) - containing the membrane proton channel, linked together by a central stalk and a peripheral stalk. During catalysis, ATP turnover in the catalytic domain of F(1) is coupled via a rotary mechanism of the central stalk subunits to proton translocation. Part of the complex F(1) domain and of the central stalk which is part of the complex rotary element. This is ATP synthase subunit delta, mitochondrial from Caenorhabditis elegans.